Here is a 268-residue protein sequence, read N- to C-terminus: tRNA pseudouridine synthase A (268 aa).

The active-site Nucleophile is the aspartate 54. Tyrosine 112 serves as a coordination point for substrate.

The protein belongs to the tRNA pseudouridine synthase TruA family. In terms of assembly, homodimer.

It carries out the reaction uridine(38/39/40) in tRNA = pseudouridine(38/39/40) in tRNA. In terms of biological role, formation of pseudouridine at positions 38, 39 and 40 in the anticodon stem and loop of transfer RNAs. This chain is tRNA pseudouridine synthase A, found in Bordetella petrii (strain ATCC BAA-461 / DSM 12804 / CCUG 43448).